The following is a 478-amino-acid chain: UDP-N-acetylmuramate--L-alanine ligase (478 aa).

120 to 126 provides a ligand contact to ATP; sequence GSHGKTT.

This sequence belongs to the MurCDEF family.

The protein resides in the cytoplasm. It catalyses the reaction UDP-N-acetyl-alpha-D-muramate + L-alanine + ATP = UDP-N-acetyl-alpha-D-muramoyl-L-alanine + ADP + phosphate + H(+). It functions in the pathway cell wall biogenesis; peptidoglycan biosynthesis. Functionally, cell wall formation. This chain is UDP-N-acetylmuramate--L-alanine ligase, found in Rickettsia felis (strain ATCC VR-1525 / URRWXCal2) (Rickettsia azadi).